Here is a 239-residue protein sequence, read N- to C-terminus: MPKSKRDKKVSLTKTAKKGLELKQNLIEELRKCVDTYKYLFIFSVANMRNSKLKDIRNAWKHSRMFFGKNKVMMVALGRSPSDEYKDNLHQVSKRLRGEVGLLFTNRTKEEVNEWFTKYTEMDYARAGNKAAFTVSLDPGPLEQFPHSMEPQLRQLGLPTALKRGVVTLLSDYEVCKEGDVLTPEQARVLKLFGYEMAEFKVTIKYMWDSQSGRFQQMGDDLPESASESTEESDSEDDD.

The tract at residues 215-239 is disordered; it reads FQQMGDDLPESASESTEESDSEDDD. Residues Ser-225, Ser-229, and Ser-233 each carry the phosphoserine modification. Positions 229-239 are enriched in acidic residues; the sequence is STEESDSEDDD.

This sequence belongs to the universal ribosomal protein uL10 family. As to quaternary structure, associates with the pre-60S ribosomal particle. Interacts with MINAS-60 (product of an alternative open reading frame of RBM10).

The protein resides in the nucleus. The protein localises to the nucleolus. It localises to the cytoplasm. Component of the ribosome assembly machinery. Nuclear paralog of the ribosomal protein P0, it binds pre-60S subunits at an early stage of assembly in the nucleolus, and is replaced by P0 in cytoplasmic pre-60S subunits and mature 80S ribosomes. This chain is mRNA turnover protein 4 homolog (MRTO4), found in Homo sapiens (Human).